The following is a 1707-amino-acid chain: Mediator of DNA damage checkpoint protein 1 (1707 aa).

The tract at residues 1 to 23 (MESTQVIDWDAEEEEETELSSGS) is disordered. The interaction with CHEK2 stretch occupies residues 1–150 (MESTQVIDWD…PRSLLTIEKT (150 aa)). Residues 2 to 222 (ESTQVIDWDA…SSPFGLGSDT (221 aa)) are interaction with the MRN complex. A Phosphothreonine modification is found at Thr4. The span at 9–18 (WDAEEEEETE) shows a compositional bias: acidic residues. An FHA domain is found at 54–105 (NVVGRSPDCSVALPFPSISKQHAVIEISAWNKAPILQDCGSLNGTQIVKPPR). Position 146 is a phosphothreonine (Thr146). The interval 166-328 (ADSEEEGDFP…EERIPVTPPV (163 aa)) is disordered. Ser168 and Ser176 each carry phosphoserine. A compositionally biased stretch (polar residues) spans 183-192 (GQRNTASPSA). Ser198 and Ser220 each carry phosphoserine. The residue at position 222 (Thr222) is a Phosphothreonine. Over residues 252–263 (ANGTTAGIQAQP) the composition is skewed to polar residues. The segment covering 264-278 (TEHKLKDTKVKKEAG) has biased composition (basic and acidic residues). Ser298 carries the phosphoserine modification. Thr300 is subject to Phosphothreonine. The residue at position 313 (Ser313) is a Phosphoserine. Thr315 carries the post-translational modification Phosphothreonine. At Ser360 the chain carries Phosphoserine. Position 362 is a phosphothreonine (Thr362). The segment covering 369 to 378 (ALDVPLERNH) has biased composition (basic and acidic residues). The tract at residues 369 to 398 (ALDVPLERNHTPMVINSDTDEEEEEEEEVS) is disordered. Phosphoserine is present on Ser385. Positions 386-397 (DTDEEEEEEEEV) are enriched in acidic residues. Thr387 carries the post-translational modification Phosphothreonine. Phosphoserine is present on residues Ser398, Ser415, Ser425, Ser438, and Ser442. 4 disordered regions span residues 417–497 (DPGA…PGSH), 520–642 (PGPS…AKEC), 679–699 (LFPCTLPQEPGPSHLSLQTPG), and 718–746 (REQSETSELHEAHGSQPSLPREPPGHQHL). The span at 425–439 (SQPQVLVEQSQSASG) shows a compositional bias: polar residues. The residue at position 444 (Thr444) is a Phosphothreonine. Position 461 is a phosphoserine (Ser461). Residue Thr470 is modified to Phosphothreonine. Ser492, Ser493, Ser591, Ser593, and Ser595 each carry phosphoserine. Over residues 580-595 (VSEQESTLEVRSQSGS) the composition is skewed to polar residues. Residues 626-642 (GREREAHVGRTKSAKEC) are compositionally biased toward basic and acidic residues. Residues 719–730 (EQSETSELHEAH) are compositionally biased toward basic and acidic residues. 2 positions are modified to phosphoserine: Ser735 and Ser750. Lys769 bears the N6-acetyllysine mark. 3 stretches are compositionally biased toward basic and acidic residues: residues 778-804 (ADRMTPEREPLEREIRGRTENSERDVI), 812-868 (TKDR…REWE), and 875-889 (TPDRGVTEEGSHDQK). Disordered stretches follow at residues 778-899 (ADRM…TLKP) and 914-1510 (IITG…QETA). Ser885, Ser929, and Ser962 each carry phosphoserine. A compositionally biased stretch (low complexity) spans 968–986 (STQSLLTSQSQKQSTPQPL). Position 991 is a phosphoserine (Ser991). 3 stretches are compositionally biased toward polar residues: residues 1026-1056 (PNTTCPTNQPAASRPTSRPTRGRANRSSTRT), 1068-1086 (QPSTSTEQPVIPKLTSQVT), and 1101-1113 (EIQSPTSTEQSVT). The residue at position 1056 (Thr1056) is a Phosphothreonine. Phosphoserine is present on residues Ser1104, Ser1126, and Ser1128. Residues Thr1132, Thr1173, and Thr1234 each carry the phosphothreonine modification. 4 stretches are compositionally biased toward polar residues: residues 1225-1241 (PLTSAKQPVTPNLTSRA), 1265-1281 (PSTSTEQPDTREPSSQA), 1295-1308 (VPTTPELQPFTSKK), and 1317-1326 (LVTQGRTYKP). Residues Thr1297 and Thr1298 each carry the phosphothreonine modification. Position 1327 is a phosphoserine (Ser1327). Over residues 1343–1363 (PSTSTDHLVTPKVTDQSLTLQ) the composition is skewed to polar residues. Thr1352 bears the Phosphothreonine mark. At Ser1359 the chain carries Phosphoserine. A compositionally biased stretch (low complexity) spans 1364 to 1376 (SSPLSASPVSSTP). At Thr1375 the chain carries Phosphothreonine. The span at 1378-1393 (LKPPVPIAQPVTPEPI) shows a compositional bias: pro residues. A Glycyl lysine isopeptide (Lys-Gly) (interchain with G-Cter in SUMO2) cross-link involves residue Lys1418. Positions 1421 to 1441 (SALSEPEPQSSASQSSGASEA) are enriched in low complexity. 4 positions are modified to phosphoserine: Ser1435, Ser1436, Ser1439, and Ser1443. A compositionally biased stretch (basic and acidic residues) spans 1459–1473 (VIKEEPVETEVKEEP). Lys1461 participates in a covalent cross-link: Glycyl lysine isopeptide (Lys-Gly) (interchain with G-Cter in SUMO1); alternate. Residue Lys1461 forms a Glycyl lysine isopeptide (Lys-Gly) (interchain with G-Cter in SUMO2); alternate linkage. Residue Thr1480 is modified to Phosphothreonine. Residues 1481-1493 (PEKRKRDHAEEVT) are compositionally biased toward basic and acidic residues. Position 1496 is an N6-acetyllysine (Lys1496). BRCT domains lie at 1510-1588 (APKV…DYLV) and 1609-1700 (RERR…FVLS).

As to quaternary structure, homodimer. Interacts with H2AX, which requires phosphorylation of H2AX on 'Ser-139'. Interacts with the MRN complex, composed of MRE11, RAD50, and NBN. Interacts with CHEK2, which requires ATM-mediated phosphorylation of 'Thr-68' within the FHA domain of CHEK2. Interacts constitutively with the BRCA1-BARD1 complex, SMC1A and TP53BP1. Interacts with ATM and FANCD2, and these interactions are reduced upon DNA damage. Also interacts with the PRKDC complex, composed of XRCC6/KU70, XRCC5/KU80 and PRKDC/XRCC7. This interaction may be required for PRKDC autophosphorylation, which is essential for DNA double strand break (DSB) repair. When phosphorylated by ATM, interacts with RNF8 (via FHA domain). Interacts with CEP164. When phosphorylated, interacts with APTX (via FHA-like domain). Interacts (when phosphorylated) with TOPBP1; promoting TOPBP1 localization to DNA damage sites during mitosis. Interacts (when phosphorylated) with NBN; promoting NBN and MRN complex localization to DNA damage sites. In terms of processing, phosphorylated upon exposure to ionizing radiation (IR), ultraviolet radiation (UV), and hydroxyurea (HU). Phosphorylation in response to IR requires ATM, NBN, and possibly CHEK2. Also phosphorylated during the G2/M phase of the cell cycle and during activation of the mitotic spindle checkpoint. Phosphorylation at Thr-4 by ATM stabilizes and enhances homodimerization via the FHA domain. Phosphorylated at Ser-168 and Ser-198 by CK2 in response to DNA damage during mitosis, promoting interaction with TOPBP1. Phosphorylated by CK2 in response to DNA damage, promoting interaction with NBN and recruitment of the MRN complex to DNA damage sites. Sumoylation at Lys-1461 by PIAS4 following DNA damage promotes ubiquitin-mediated degradation. Post-translationally, ubiquitinated by RNF4, leading to proteasomal degradation; undergoes 'Lys-48'-linked polyubiquitination.

Its subcellular location is the nucleus. It is found in the chromosome. Histone reader protein required for checkpoint-mediated cell cycle arrest in response to DNA damage within both the S phase and G2/M phases of the cell cycle. Specifically recognizes and binds histone H2AX phosphorylated at 'Ser-139', a marker of DNA damage, serving as a scaffold for the recruitment of DNA repair and signal transduction proteins to discrete foci of DNA damage sites. Also required for downstream events subsequent to the recruitment of these proteins. These include phosphorylation and activation of the ATM, CHEK1 and CHEK2 kinases, and stabilization of TP53/p53 and apoptosis. ATM and CHEK2 may also be activated independently by a parallel pathway mediated by TP53BP1. Required for chromosomal stability during mitosis by promoting recruitment of TOPBP1 to DNA double strand breaks (DSBs): TOPBP1 forms filamentous assemblies that bridge MDC1 and tether broken chromosomes during mitosis. Required for the repair of DSBs via homologous recombination by promoting recruitment of NBN component of the MRN complex to DSBs. The polypeptide is Mediator of DNA damage checkpoint protein 1 (Mdc1) (Mus musculus (Mouse)).